Consider the following 110-residue polypeptide: Inner membrane protein YgiZ (110 aa).

Topologically, residues 1 to 8 (MLKQKIKT) are cytoplasmic. The helical transmembrane segment at 9-29 (IFEALLYIMLTYWLIDSFFAF) threads the bilayer. Residues 30–53 (NKYDWMLESGGNICSIPSVSGEDR) lie on the Periplasmic side of the membrane. A helical transmembrane segment spans residues 54–74 (ILQAMIAAFFLLTPLIILILR). Over 75 to 83 (KLFMREMFE) the chain is Cytoplasmic. A helical membrane pass occupies residues 84-104 (FWVYVFSLGICLVCGWWLFWG). The Periplasmic segment spans residues 105–110 (RFIFCY).

It localises to the cell inner membrane. This Escherichia coli (strain K12) protein is Inner membrane protein YgiZ (ygiZ).